The following is a 217-amino-acid chain: Resolvase homolog YneB (217 aa).

A Resolvase/invertase-type recombinase catalytic domain is found at Lys-2–Gly-147. Ser-10 acts as the O-(5'-phospho-DNA)-serine intermediate in catalysis.

This sequence belongs to the site-specific recombinase resolvase family.

This Bacillus subtilis (strain 168) protein is Resolvase homolog YneB (yneB).